A 1988-amino-acid polypeptide reads, in one-letter code: Protein Ycf2 (1988 aa).

1337–1344 contributes to the ATP binding site; it reads GSIGTGRS. The interval 1377 to 1396 is disordered; it reads SDDDSDDIDDSGDIDDSDDI.

Belongs to the Ycf2 family.

Its subcellular location is the plastid. The protein resides in the chloroplast stroma. Functionally, probable ATPase of unknown function. Its presence in a non-photosynthetic plant (Epifagus virginiana) and experiments in tobacco indicate that it has an essential function which is probably not related to photosynthesis. The sequence is that of Protein Ycf2 from Cucumis sativus (Cucumber).